We begin with the raw amino-acid sequence, 94 residues long: Acylphosphatase (94 aa).

Residues 5-94 form the Acylphosphatase-like domain; it reads RLTAFVHGHV…PRDVEGFVER (90 aa). Catalysis depends on residues R20 and N38.

It belongs to the acylphosphatase family.

It catalyses the reaction an acyl phosphate + H2O = a carboxylate + phosphate + H(+). In Corynebacterium glutamicum (strain ATCC 13032 / DSM 20300 / JCM 1318 / BCRC 11384 / CCUG 27702 / LMG 3730 / NBRC 12168 / NCIMB 10025 / NRRL B-2784 / 534), this protein is Acylphosphatase (acyP).